We begin with the raw amino-acid sequence, 524 residues long: Tubulin-specific chaperone E (524 aa).

An N-acetylserine modification is found at Ser2. The CAP-Gly domain occupies 27–71 (GAVPPVAGLWLGVEWDNPERGKHDGSHEGTMYFKCRHPTGGSFVR). 7 LRR repeats span residues 154–175 (NIRV…ILIA), 180–201 (DLEA…PTLT), 206–227 (TLKT…HCAP), 231–253 (VLQE…NALQ), 254–273 (NLRL…QLCL), 279–300 (RLEH…DAEI), and 309–330 (ALTY…NELD). The 39-residue stretch at 343 to 381 (NPLTKGDKAEEIIIAKIGQLKTLNRCQILPEERRGAELD) folds into the LRRCT domain. Lys460 is modified (N6-acetyllysine). Ser492 is subject to Phosphoserine.

This sequence belongs to the TBCE family. Supercomplex made of cofactors A to E. Cofactors A and D function by capturing and stabilizing tubulin in a quasi-native conformation. Cofactor E binds to the cofactor D-tubulin complex; interaction with cofactor C then causes the release of tubulin polypeptides that are committed to the native state. Cofactors B and E can form a heterodimer which binds to alpha-tubulin and enhances their ability to dissociate tubulin heterodimers. Interacts with TBCD.

It is found in the cytoplasm. It localises to the cytoskeleton. Functionally, tubulin-folding protein; involved in the second step of the tubulin folding pathway and in the regulation of tubulin heterodimer dissociation. Required for correct organization of microtubule cytoskeleton and mitotic splindle, and maintenance of the neuronal microtubule network. The protein is Tubulin-specific chaperone E (Tbce) of Rattus norvegicus (Rat).